Reading from the N-terminus, the 1165-residue chain is Linoleate diol synthase (1165 aa).

The fatty acid alpha-dioxygenase stretch occupies residues 104 to 448; it reads TDGLINDLWD…DGAFDDTELV (345 aa). Residue H203 coordinates heme b. Ca(2+) is bound by residues D204, S219, Y221, D223, and S225. The active site involves Y376. H379 is a binding site for heme b. An epoxy alcohol synthase region spans residues 666 to 1161; sequence EVLSNQKDYK…ATTMKINWEG (496 aa). Residue C1080 coordinates heme. The tract at residues 1114–1134 is disordered; that stretch reads RSYPASQWPGQAGRPPRDPAW.

The protein belongs to the peroxidase family. In terms of assembly, homotetramer. Heme b serves as cofactor. Ca(2+) is required as a cofactor. Requires heme as cofactor. In terms of processing, the N-terminus is blocked.

The enzyme catalyses (9Z,12Z)-octadecadienoate + O2 = (8R,9Z,12Z)-8-hydroperoxyoctadeca-9,12-dienoate. It carries out the reaction (8R,9Z,12Z)-8-hydroperoxyoctadeca-9,12-dienoate = (7S,8S,9Z,12Z)-7,8-dihydroxyoctadeca-9,12-dienoate. Its function is as follows. 7,8-linoleate diol synthase is a bifunctional enzyme that converts linoleic acid (18:2n-6) into 8-hydroperoxy-8(E),12(Z)-octadecadienoic acid (8-HPODE) and then catalyzes the isomerization of the resulting hydroperoxide to 7,8-dihydroxy-9(Z),12(Z)-octadecadienoic acid (7,8-DiHODE). This Gaeumannomyces graminis (Turf grass take-all root rot fungus) protein is Linoleate diol synthase.